A 559-amino-acid polypeptide reads, in one-letter code: Dihydroxy-acid dehydratase 2 (559 aa).

Residue Cys-53 participates in [2Fe-2S] cluster binding. Asp-85 is a binding site for Mg(2+). A [2Fe-2S] cluster-binding site is contributed by Cys-126. Residues Asp-127 and Lys-128 each coordinate Mg(2+). Lys-128 is subject to N6-carboxylysine. Residue Cys-195 participates in [2Fe-2S] cluster binding. A Mg(2+)-binding site is contributed by Glu-446. Catalysis depends on Ser-472, which acts as the Proton acceptor.

Belongs to the IlvD/Edd family. In terms of assembly, homodimer. [2Fe-2S] cluster is required as a cofactor. The cofactor is Mg(2+).

The catalysed reaction is (2R)-2,3-dihydroxy-3-methylbutanoate = 3-methyl-2-oxobutanoate + H2O. It catalyses the reaction (2R,3R)-2,3-dihydroxy-3-methylpentanoate = (S)-3-methyl-2-oxopentanoate + H2O. Its pathway is amino-acid biosynthesis; L-isoleucine biosynthesis; L-isoleucine from 2-oxobutanoate: step 3/4. The protein operates within amino-acid biosynthesis; L-valine biosynthesis; L-valine from pyruvate: step 3/4. Its function is as follows. Functions in the biosynthesis of branched-chain amino acids. Catalyzes the dehydration of (2R,3R)-2,3-dihydroxy-3-methylpentanoate (2,3-dihydroxy-3-methylvalerate) into 2-oxo-3-methylpentanoate (2-oxo-3-methylvalerate) and of (2R)-2,3-dihydroxy-3-methylbutanoate (2,3-dihydroxyisovalerate) into 2-oxo-3-methylbutanoate (2-oxoisovalerate), the penultimate precursor to L-isoleucine and L-valine, respectively. In Pseudoalteromonas translucida (strain TAC 125), this protein is Dihydroxy-acid dehydratase 2.